The chain runs to 477 residues: Membrane-bound lytic murein transglycosylase F (477 aa).

The signal sequence occupies residues 1–22; that stretch reads MTRFLLIIILGFLLTACQQVTV. Positions 23 to 257 are non-LT domain; that stretch reads DEPEFVPHQL…HLNEKYFGHV (235 aa). The LT domain stretch occupies residues 258-477; the sequence is KRFDYIDTRA…AGSLSPDQPK (220 aa). The active site involves Glu-302. Residues 446 to 477 are disordered; that stretch reads SKQPMPEDEQNDLIAEELPSMPAGSLSPDQPK. A compositionally biased stretch (acidic residues) spans 451–460; it reads PEDEQNDLIA.

This sequence in the N-terminal section; belongs to the bacterial solute-binding protein 3 family. The protein in the C-terminal section; belongs to the transglycosylase Slt family.

Its subcellular location is the cell outer membrane. It catalyses the reaction Exolytic cleavage of the (1-&gt;4)-beta-glycosidic linkage between N-acetylmuramic acid (MurNAc) and N-acetylglucosamine (GlcNAc) residues in peptidoglycan, from either the reducing or the non-reducing ends of the peptidoglycan chains, with concomitant formation of a 1,6-anhydrobond in the MurNAc residue.. Its function is as follows. Murein-degrading enzyme that degrades murein glycan strands and insoluble, high-molecular weight murein sacculi, with the concomitant formation of a 1,6-anhydromuramoyl product. Lytic transglycosylases (LTs) play an integral role in the metabolism of the peptidoglycan (PG) sacculus. Their lytic action creates space within the PG sacculus to allow for its expansion as well as for the insertion of various structures such as secretion systems and flagella. This is Membrane-bound lytic murein transglycosylase F from Shewanella sp. (strain W3-18-1).